The following is a 1312-amino-acid chain: MSKIEKMSIQGVRSFGIEDKNKQVIQFFTPLTVLVGPNGAGKTTIIECLKYITTGDFPPGSKGKTFVHDPKVAHETDVRAQIRLQLKDVNGELVAVQRSMICTQKGKSTEFKTLEGVITRIKHGEKVSLSTKCAEMDKEMISALGVSAAVLNNVIFCHQEDSNWPLSEGRQLKVKFDEIFSATRYIKALETLKKVRTQQAHNVREYQVEIKYLKQNKEKAREIQDNLQSKEKQLAVSKENVKSIESQLEPLKDRLADIQRNLSKVMRLDNEIKALESRKRTMEQDNQDLEEKMEKVFQGTDEELNGMYQNHQRSVREKERKLNDQQREMDRACKESQRLNREKGELLVQQGRLQLEADHHQQYIKTRDSLIKSLAAQLELDGFERTPFNQRQTSNFQMLVKERQEKDEAHANQILREFSEREAMKQRQLDEMRDKKTGLERTIELKSSTQSKKHTDLKNVKYELQQLEGSSDRLQELDEELQKTERELENVEKSCNLEALRGEVLQLQNQKSELDRNVRKLDQEMEQMNTHTMTRTQMDMLKKDKADKDEQIRKIKSRHNDELSLLLGYFPNKKQLEDWLYSKRKDINQTRDKLARLTKELVAAEQNKNHLSNELRRKEEQSASFEEKVFDVCGSQDFDSDLSRLQDDIEKTSKQRAMLAGATAVYTQFITTLTEENQPCCPVCQRIFPSEAELQDVINDMQSKLRLVPDKLKSAEGELKRKEKRKDDMMELKPMRQMLADLKEKEIPEIRNKLVTINREIQRLKNDVDEQETLIATFASEEESAKACLQDISLMERYQMELRDVERKIAQYATKLQGVDLNRTVQQVSQEKQEKQHNLDNVSGKIELLRKRIQDQQEQVQQLKSAVNELTAEKLHISSNLQRRQQLEDQNVELTTELQCLAREIKEAREQLFPLESTLQKLQQEKQELLQRKESSYREAQEKVNDIKEKVKKINLLTKDIEKYSQDGKEEFKEQKESELQELIGRLNECEKLKEKVNREMVTIRQDIDTQKIQERCLQDNLTLRKRIEELKRVEEERHQLLKEMGQMKVVQMKNEYQELENKSESLKTNHSLALGRQKGFEDEILRFKKELRESQYKEAEEKYREKMIVMRTTELAIKDLDIYYKTLDQAIMKYHSIKMEEINKIVRDLWRSTYRSQDIEYIEIQSDADESVTAADKRRTYNYRVVMIKGDTALDMRGRCSAGQKVLASLIIRLALAETFCLNCGILALDEPTTNLDRENIESLAHALVEIIKSRSRQRNFQLIVITHDEDFVELLGRSEYVEHFYRIKKNIDQCSEIIRCSVNSLASYVH.

10 residues coordinate ATP: R13, N38, G39, G41, K42, T43, T44, V67, D69, and Q159. T43 serves as a coordination point for Mg(2+). Q159 serves as a coordination point for Mg(2+). Coiled-coil stretches lie at residues 203 to 342, 415 to 558, and 587 to 628; these read VREY…LNRE, LREF…IKSR, and INQT…FEEK. Residues 635 to 734 enclose the Zinc-hook domain; sequence SQDFDSDLSR…RKDDMMELKP (100 aa). Zn(2+)-binding residues include C681 and C684. Positions 712–1070 form a coiled coil; it reads LKSAEGELKR…ENKSESLKTN (359 aa).

The protein belongs to the SMC family. RAD50 subfamily. As to quaternary structure, component of the MRN complex composed of two heterodimers RAD50 and MRE11 associated with a single NBN. Zn(2+) is required as a cofactor.

Its subcellular location is the nucleus. It localises to the chromosome. The protein resides in the telomere. It catalyses the reaction ATP + H2O = ADP + phosphate + H(+). Component of the MRN complex, which plays a central role in double-strand break (DSB) repair, DNA recombination, maintenance of telomere integrity and meiosis. The MRN complex is involved in the repair of DNA double-strand breaks (DSBs) via homologous recombination (HR), an error-free mechanism which primarily occurs during S and G2 phases. The complex (1) mediates the end resection of damaged DNA, which generates proper single-stranded DNA, a key initial steps in HR, and is (2) required for the recruitment of other repair factors and efficient activation of ATM and ATR upon DNA damage. The MRN complex possesses single-strand endonuclease activity and double-strand-specific 3'-5' exonuclease activity, which are provided by mre11, to initiate end resection, which is required for single-strand invasion and recombination. Within the complex, rad50 is both required to bind DNA ends and hold them in close proximity and regulate the activity of MRE11. Rad50 provides an ATP-dependent control of MRE11 by positioning DNA ends into the mre11 active site: ATP-binding induces a large structural change from an open form with accessible MRE11 nuclease sites into a closed form. The MRN complex is also required for DNA damage signaling via activation of the atm and atr kinases: the nuclease activity of mre11 is not required to activate ATM and ATR. The MRN complex promotes recruitment of topbp1 to DNA damage sites. The MRN complex and rbbp8/CtIP are also required for chromosome alignment during metaphase. The chain is DNA repair protein RAD50.L from Xenopus laevis (African clawed frog).